A 118-amino-acid polypeptide reads, in one-letter code: Large ribosomal subunit protein bL17 (118 aa).

Belongs to the bacterial ribosomal protein bL17 family. In terms of assembly, part of the 50S ribosomal subunit. Contacts protein L32.

The sequence is that of Large ribosomal subunit protein bL17 from Onion yellows phytoplasma (strain OY-M).